A 211-amino-acid polypeptide reads, in one-letter code: SAGA-associated factor 11 homolog 2 (211 aa).

An SGF11-type zinc finger spans residues 115-136 (CTCPNCDRLVAAARFAPHLEKC). Positions 149 to 211 (RRLATKEGSS…GSKKNNGKTF (63 aa)) are disordered. The span at 157–166 (SSASTSSTST) shows a compositional bias: low complexity. Serine 187 bears the Phosphoserine mark. Low complexity predominate over residues 197 to 211 (SSRNNGSKKNNGKTF).

The protein belongs to the SGF11 family. In terms of assembly, component of some SAGA transcription coactivator-HAT complexes, at least composed of Ada2b, not/nonstop, Pcaf/Gcn5, Sgf11 and Spt3. Within the SAGA complex, Sgf11, e(y)2, and not/nonstop form an additional subcomplex of SAGA called the DUB module (deubiquitination module). Interacts directly with not/nonstop. Interacts with the AMEX complex component xmas-2. Interacts with Cbp80; important for promoter recruitment of Sgf11 that is not associated with the DUB module.

The protein localises to the nucleus. It localises to the nucleoplasm. Its subcellular location is the cytoplasm. Component of the transcription regulatory histone acetylation (HAT) complex SAGA, a multiprotein complex that activates transcription by remodeling chromatin and mediating histone acetylation and deubiquitination. Within the SAGA complex, participates in a subcomplex that specifically deubiquitinates histone H2B. The SAGA complex is recruited to specific gene promoters by activators, where it is required for transcription. Required for nuclear receptor-mediated transactivation. Binds independently on SAGA to promoters in an RNA-dependent manner. Binds to mRNA and is essential for total mRNA export from the nucleus. Required to counteract heterochromatin silencing. Controls the development of neuronal connectivity in visual system by being required for accurate axon targeting in the optic lobe. Required for expression of ecdysone-induced genes such as br/broad. The polypeptide is SAGA-associated factor 11 homolog 2 (Drosophila grimshawi (Hawaiian fruit fly)).